A 350-amino-acid polypeptide reads, in one-letter code: S-adenosylmethionine:tRNA ribosyltransferase-isomerase (350 aa).

The protein belongs to the QueA family. In terms of assembly, monomer.

It is found in the cytoplasm. The catalysed reaction is 7-aminomethyl-7-carbaguanosine(34) in tRNA + S-adenosyl-L-methionine = epoxyqueuosine(34) in tRNA + adenine + L-methionine + 2 H(+). It functions in the pathway tRNA modification; tRNA-queuosine biosynthesis. In terms of biological role, transfers and isomerizes the ribose moiety from AdoMet to the 7-aminomethyl group of 7-deazaguanine (preQ1-tRNA) to give epoxyqueuosine (oQ-tRNA). In Parvibaculum lavamentivorans (strain DS-1 / DSM 13023 / NCIMB 13966), this protein is S-adenosylmethionine:tRNA ribosyltransferase-isomerase.